Consider the following 462-residue polypeptide: Receptor like protein 29 (462 aa).

Residues 1–26 (MTMKRALPSPSSLLFFFLLITPLFLC) form the signal peptide. At 27–441 (QENRVSASMP…SQASRYYRSC (415 aa)) the chain is on the extracellular side. N-linked (GlcNAc...) asparagine glycosylation is present at Asn-139. LRR repeat units lie at residues 139 to 164 (NSSL…ISSL), 165 to 188 (KSLQ…IFSL), 190 to 212 (SLVH…LGNL), 213 to 236 (NNLV…ISQL), 238 to 260 (MLQK…VEKL), 261 to 284 (RSLS…ISNL), 286 to 308 (SLQY…LGFL), 309 to 331 (PKLQ…SYTK), 332 to 355 (LTNL…GFES), and 357 to 381 (PHVF…SFLR). Residues Asn-334, Asn-363, and Asn-416 are each glycosylated (N-linked (GlcNAc...) asparagine). The chain crosses the membrane as a helical span at residues 442-462 (FFANALFPFALFLGLHQRWVL).

The protein belongs to the RLP family.

It is found in the cell membrane. The polypeptide is Receptor like protein 29 (Arabidopsis thaliana (Mouse-ear cress)).